Here is a 220-residue protein sequence, read N- to C-terminus: Ribose-5-phosphate isomerase A (220 aa).

Substrate-binding positions include 28–31 (TGST), 81–84 (DGAD), and 94–97 (KGGG). Glu-103 serves as the catalytic Proton acceptor. Lys-121 lines the substrate pocket.

This sequence belongs to the ribose 5-phosphate isomerase family. As to quaternary structure, homodimer.

It catalyses the reaction aldehydo-D-ribose 5-phosphate = D-ribulose 5-phosphate. It functions in the pathway carbohydrate degradation; pentose phosphate pathway; D-ribose 5-phosphate from D-ribulose 5-phosphate (non-oxidative stage): step 1/1. In terms of biological role, catalyzes the reversible conversion of ribose-5-phosphate to ribulose 5-phosphate. The chain is Ribose-5-phosphate isomerase A from Coxiella burnetii (strain CbuK_Q154) (Coxiella burnetii (strain Q154)).